A 466-amino-acid chain; its full sequence is MLPSTIQTLTLFLTSGGVLLSLYVSASLSYLLYSDILLKFSTTKITAPTMSLDCANISNVQAVNRSATKEMTFLLPEPEWTYPRLSCQGSTFQKALLISPHRFGEARGNSAPLIIREPFIACGPKECKHFALTHYAAQPGGYYNGTRKDRNKLRHLISVKLGKIPTVENSIFHMAAWSGSACHDGREWTYIGVDGPDSNALIKIKYGEAYTDTYHSYANNILRTQESACNCIGGDCYLMITDGSASGISKCRFLKIREGRIIKEIFPTGRVEHTEECTCGFASNKTIECACRDNSYTAKRPFVKLNVETDTAEIRLMCTETYLDTPRPDDGSITGPCESNGDKGLGGIKGGFVHQRMASKIGRWYSRTMSKTERMGMELYVKYDGDPWTDSDALAPSGVMVSMKEPGWYSFGFEIKDKKCDVPCIGIEMVHDGGKETWHSAATAIYCLMGSGQLLWDTVTGVDMAL.

Topologically, residues 1–8 (MLPSTIQT) are intravirion. A helical transmembrane segment spans residues 9–31 (LTLFLTSGGVLLSLYVSASLSYL). Residues 13 to 35 (LTSGGVLLSLYVSASLSYLLYSD) form an involved in apical transport and lipid raft association region. Residues 32 to 466 (LYSDILLKFS…DTVTGVDMAL (435 aa)) are Virion surface-facing. Residues 38–86 (LKFSTTKITAPTMSLDCANISNVQAVNRSATKEMTFLLPEPEWTYPRLS) form a hypervariable stalk region region. N56 and N64 each carry an N-linked (GlcNAc...) asparagine; by host glycan. 8 disulfide bridges follow: C87–C420, C122–C127, C182–C229, C231–C236, C277–C291, C279–C289, C318–C337, and C424–C447. A head of neuraminidase region spans residues 89-466 (GSTFQKALLI…DTVTGVDMAL (378 aa)). Residue R116 coordinates substrate. Residue N144 is glycosylated (N-linked (GlcNAc...) asparagine; by host). The active-site Proton donor/acceptor is the D149. Position 150 (R150) interacts with substrate. Substrate is bound at residue 275-276 (EE). N284 is a glycosylation site (N-linked (GlcNAc...) asparagine; by host). R292 contributes to the substrate binding site. Residues D293 and D324 each coordinate Ca(2+). R374 lines the substrate pocket. Y409 acts as the Nucleophile in catalysis.

It belongs to the glycosyl hydrolase 34 family. In terms of assembly, homotetramer. The cofactor is Ca(2+). Post-translationally, N-glycosylated.

The protein resides in the virion membrane. It is found in the host apical cell membrane. The catalysed reaction is Hydrolysis of alpha-(2-&gt;3)-, alpha-(2-&gt;6)-, alpha-(2-&gt;8)- glycosidic linkages of terminal sialic acid residues in oligosaccharides, glycoproteins, glycolipids, colominic acid and synthetic substrates.. With respect to regulation, inhibited by the neuraminidase inhibitors zanamivir (Relenza) and oseltamivir (Tamiflu). These drugs interfere with the release of progeny virus from infected cells and are effective against all influenza strains. Resistance to neuraminidase inhibitors is quite rare. In terms of biological role, catalyzes the removal of terminal sialic acid residues from viral and cellular glycoconjugates. Cleaves off the terminal sialic acids on the glycosylated HA during virus budding to facilitate virus release. Additionally helps virus spread through the circulation by further removing sialic acids from the cell surface. These cleavages prevent self-aggregation and ensure the efficient spread of the progeny virus from cell to cell. Otherwise, infection would be limited to one round of replication. Described as a receptor-destroying enzyme because it cleaves a terminal sialic acid from the cellular receptors. May facilitate viral invasion of the upper airways by cleaving the sialic acid moieties on the mucin of the airway epithelial cells. Likely to plays a role in the budding process through its association with lipid rafts during intracellular transport. May additionally display a raft-association independent effect on budding. Plays a role in the determination of host range restriction on replication and virulence. Sialidase activity in late endosome/lysosome traffic seems to enhance virus replication. The protein is Neuraminidase of Homo sapiens (Human).